We begin with the raw amino-acid sequence, 174 residues long: Adenine phosphoribosyltransferase (174 aa).

The protein belongs to the purine/pyrimidine phosphoribosyltransferase family. As to quaternary structure, homodimer.

It localises to the cytoplasm. It catalyses the reaction AMP + diphosphate = 5-phospho-alpha-D-ribose 1-diphosphate + adenine. The protein operates within purine metabolism; AMP biosynthesis via salvage pathway; AMP from adenine: step 1/1. In terms of biological role, catalyzes a salvage reaction resulting in the formation of AMP, that is energically less costly than de novo synthesis. The protein is Adenine phosphoribosyltransferase of Mycobacterium sp. (strain JLS).